The sequence spans 282 residues: 4-hydroxy-3-methylbut-2-enyl diphosphate reductase (282 aa).

Residue cysteine 12 coordinates [4Fe-4S] cluster. Residues histidine 40 and histidine 72 each coordinate (2E)-4-hydroxy-3-methylbut-2-enyl diphosphate. The dimethylallyl diphosphate site is built by histidine 40 and histidine 72. Histidine 40 and histidine 72 together coordinate isopentenyl diphosphate. Position 94 (cysteine 94) interacts with [4Fe-4S] cluster. Histidine 122 is a (2E)-4-hydroxy-3-methylbut-2-enyl diphosphate binding site. Position 122 (histidine 122) interacts with dimethylallyl diphosphate. An isopentenyl diphosphate-binding site is contributed by histidine 122. Glutamate 124 (proton donor) is an active-site residue. Residue threonine 160 participates in (2E)-4-hydroxy-3-methylbut-2-enyl diphosphate binding. Cysteine 188 lines the [4Fe-4S] cluster pocket. 3 residues coordinate (2E)-4-hydroxy-3-methylbut-2-enyl diphosphate: serine 216, asparagine 218, and serine 260. Residues serine 216, asparagine 218, and serine 260 each contribute to the dimethylallyl diphosphate site. Isopentenyl diphosphate-binding residues include serine 216, asparagine 218, and serine 260.

It belongs to the IspH family. The cofactor is [4Fe-4S] cluster.

The enzyme catalyses isopentenyl diphosphate + 2 oxidized [2Fe-2S]-[ferredoxin] + H2O = (2E)-4-hydroxy-3-methylbut-2-enyl diphosphate + 2 reduced [2Fe-2S]-[ferredoxin] + 2 H(+). The catalysed reaction is dimethylallyl diphosphate + 2 oxidized [2Fe-2S]-[ferredoxin] + H2O = (2E)-4-hydroxy-3-methylbut-2-enyl diphosphate + 2 reduced [2Fe-2S]-[ferredoxin] + 2 H(+). It functions in the pathway isoprenoid biosynthesis; dimethylallyl diphosphate biosynthesis; dimethylallyl diphosphate from (2E)-4-hydroxy-3-methylbutenyl diphosphate: step 1/1. Its pathway is isoprenoid biosynthesis; isopentenyl diphosphate biosynthesis via DXP pathway; isopentenyl diphosphate from 1-deoxy-D-xylulose 5-phosphate: step 6/6. Functionally, catalyzes the conversion of 1-hydroxy-2-methyl-2-(E)-butenyl 4-diphosphate (HMBPP) into a mixture of isopentenyl diphosphate (IPP) and dimethylallyl diphosphate (DMAPP). Acts in the terminal step of the DOXP/MEP pathway for isoprenoid precursor biosynthesis. The protein is 4-hydroxy-3-methylbut-2-enyl diphosphate reductase of Geobacter metallireducens (strain ATCC 53774 / DSM 7210 / GS-15).